The chain runs to 550 residues: Medium-chain acyl-CoA ligase Mig (550 aa).

Positions 1–19 (MSDTTTAFTVPAVAKAVAA) are cleaved as a signal peptide.

It belongs to the ATP-dependent AMP-binding enzyme family.

The protein resides in the secreted. Its subcellular location is the cell wall. The enzyme catalyses a medium-chain fatty acid + ATP + CoA = a medium-chain fatty acyl-CoA + AMP + diphosphate. It catalyses the reaction hexanoate + ATP + CoA = hexanoyl-CoA + AMP + diphosphate. It carries out the reaction heptanoate + ATP + CoA = heptanoyl-CoA + AMP + diphosphate. The catalysed reaction is octanoate + ATP + CoA = octanoyl-CoA + AMP + diphosphate. The enzyme catalyses decanoate + ATP + CoA = decanoyl-CoA + AMP + diphosphate. It catalyses the reaction dodecanoate + ATP + CoA = dodecanoyl-CoA + AMP + diphosphate. It carries out the reaction tetradecanoate + ATP + CoA = tetradecanoyl-CoA + AMP + diphosphate. The catalysed reaction is (9Z)-octadecenoate + ATP + CoA = (9Z)-octadecenoyl-CoA + AMP + diphosphate. The enzyme catalyses (9Z,12Z,15Z)-octadecatrienoate + ATP + CoA = (9Z,12Z,15Z)-octadecatrienoyl-CoA + AMP + diphosphate. It catalyses the reaction (5Z,8Z,11Z,14Z)-eicosatetraenoate + ATP + CoA = (5Z,8Z,11Z,14Z)-eicosatetraenoyl-CoA + AMP + diphosphate. It participates in lipid metabolism; fatty acid metabolism. With respect to regulation, inhibited by 2-hydroxydodecanoic acid, a typical inhibitor of medium-chain acyl-CoA synthetases. Its function is as follows. Catalyzes the activation of medium-chain fatty acids as acyl-coenzyme A (acyl-CoA). Shows maximal activity with saturated fatty acids of medium-chain length between C6 and C12. Has lower activity with tridecanoic acid (C13), tetradecanoic acid (C14) and with unsaturated fatty acids like oleic acid (C18:1), linolenic acid (C18:3) and arachidonic acid (C20:4). Shows weak activity with some aromatic carbon acids. Involved in the metabolism of fatty acid during mycobacterial survival in macrophages. This is Medium-chain acyl-CoA ligase Mig from Mycobacterium avium.